We begin with the raw amino-acid sequence, 899 residues long: Protein translocase subunit SecA (899 aa).

Residues glutamine 87, 105-109 (GEGKT), and aspartate 516 contribute to the ATP site. The Zn(2+) site is built by cysteine 884, cysteine 886, cysteine 895, and histidine 896.

Belongs to the SecA family. As to quaternary structure, monomer and homodimer. Part of the essential Sec protein translocation apparatus which comprises SecA, SecYEG and auxiliary proteins SecDF. Other proteins may also be involved. Zn(2+) serves as cofactor.

The protein resides in the cell inner membrane. The protein localises to the cytoplasm. It catalyses the reaction ATP + H2O + cellular proteinSide 1 = ADP + phosphate + cellular proteinSide 2.. Part of the Sec protein translocase complex. Interacts with the SecYEG preprotein conducting channel. Has a central role in coupling the hydrolysis of ATP to the transfer of proteins into and across the cell membrane, serving as an ATP-driven molecular motor driving the stepwise translocation of polypeptide chains across the membrane. The sequence is that of Protein translocase subunit SecA from Borrelia garinii subsp. bavariensis (strain ATCC BAA-2496 / DSM 23469 / PBi) (Borreliella bavariensis).